Reading from the N-terminus, the 228-residue chain is Cytochrome c biogenesis ATP-binding export protein CcmA (228 aa).

The ABC transporter domain occupies 2 to 227 (LSIERLGVGR…LHLERSGAWL (226 aa)). 34 to 41 (GANGSGKT) provides a ligand contact to ATP. The disordered stretch occupies residues 106–126 (GAPDGTSSVPASGRSGVAAPP).

Belongs to the ABC transporter superfamily. CcmA exporter (TC 3.A.1.107) family. In terms of assembly, the complex is composed of two ATP-binding proteins (CcmA) and two transmembrane proteins (CcmB).

It localises to the cell inner membrane. The enzyme catalyses heme b(in) + ATP + H2O = heme b(out) + ADP + phosphate + H(+). Functionally, part of the ABC transporter complex CcmAB involved in the biogenesis of c-type cytochromes; once thought to export heme, this seems not to be the case, but its exact role is uncertain. Responsible for energy coupling to the transport system. This is Cytochrome c biogenesis ATP-binding export protein CcmA from Paraburkholderia xenovorans (strain LB400).